We begin with the raw amino-acid sequence, 239 residues long: Ribonuclease PH (239 aa).

Phosphate-binding positions include Arg86 and 124–126; that span reads GTR.

It belongs to the RNase PH family. In terms of assembly, homohexameric ring arranged as a trimer of dimers.

It catalyses the reaction tRNA(n+1) + phosphate = tRNA(n) + a ribonucleoside 5'-diphosphate. Functionally, phosphorolytic 3'-5' exoribonuclease that plays an important role in tRNA 3'-end maturation. Removes nucleotide residues following the 3'-CCA terminus of tRNAs; can also add nucleotides to the ends of RNA molecules by using nucleoside diphosphates as substrates, but this may not be physiologically important. Probably plays a role in initiation of 16S rRNA degradation (leading to ribosome degradation) during starvation. In Sodalis glossinidius (strain morsitans), this protein is Ribonuclease PH.